The chain runs to 261 residues: Tryptophan synthase alpha chain (261 aa).

Catalysis depends on proton acceptor residues Glu-49 and Asp-60.

Belongs to the TrpA family. As to quaternary structure, tetramer of two alpha and two beta chains.

It catalyses the reaction (1S,2R)-1-C-(indol-3-yl)glycerol 3-phosphate + L-serine = D-glyceraldehyde 3-phosphate + L-tryptophan + H2O. It participates in amino-acid biosynthesis; L-tryptophan biosynthesis; L-tryptophan from chorismate: step 5/5. The alpha subunit is responsible for the aldol cleavage of indoleglycerol phosphate to indole and glyceraldehyde 3-phosphate. This chain is Tryptophan synthase alpha chain, found in Leifsonia xyli subsp. xyli (strain CTCB07).